A 1685-amino-acid chain; its full sequence is MDDDNLDELVAHSPGPDGPPQVGSSELASDAEESSNGHSEDSEDDTGSEQDDDTDGEETEGLSEEEDPEDRSGSEDSEDGIEVPTAAVETQRKLEASSTPNSDDDAESCPICLNAFRDQAVGTPETCAHYFCLDCIIEWSRNANSCPVDRTIFKCICIRAQFNGKILKKIPVENTRACEDEEAEEEDPTFCEVCGRSDREDRLLLCDGCDAGYHMECLDPPLQEVPVDEWFCPECAVPGVDPTHDAAPVSDEEVSLLLADVVPTTSRLRPRVGRTRAIARTRQSERVRATVNRNRISSARRVQHVPRYLMSSLLDETIEAVATGLSTAVYQRPLTPRVPAKRKRKAGRRKKVLGRKKTRSRSSVKSKSGGTRAKKRQHRVRRTKGRKLKNEVTARSRIARTLGLRRPVRGTSMPSVYKPVDPSLGLMRADIGAASLSLFGDPYALDPFDSNGEQSADPPSPLSAKRRVLSRSALQSHQPVARPVAMGLARRQLPAVAPEPSVEEAPVPDLLGSILCGQSLLMMSSADVVIHRDGSLSAKRAAPVSLQRNSVTQSREESRLRDNLQPGALPSESVSGGLIGDRRPNSGLSCGDRTALRCLPAQIVQTPVRSDSSVTPRSGLSGNLSDESRPKWKHSNSPRLNGSNVRVGSASTKTMTHSNFPSKNIAPGHPQKTDPRRPDFSKLPRIPKIRRDGSNSTQDQAPASGQTVELPSACISRLTGREGPGQPGRGRADSEPSSRGPQETGSHTSGSRPPAPSSHGNLAPLGPSRGKGIGSSFESFRINIPGNTAHCSQLSSPGFCNTFRPVDSKVQRKENPSPLFSIKKPKQLKSEIYDPFDPTGSDSSPPSSSPESLGSGLLPSEITRTISINSPKAPAFQTVRCVTSYRVESVFGTEMDPDPQPPGEPVSGMLELLGKGPAEGASDLEQEGLGEIEPTEIQGSSARAQRPSPPDPWDDEDGVSCTPFFGSEERTVTCVTVEEPSVPSPDAPQITTHRIVEFRASSRSRSTSSSRSRKKTKKKKKVAREHQRTRSSTRSGSRDRTSRSVSPFTEEHTKRHRAKTKSRRSSSDRASSQDRAKRRKDRDREHRRGPWGHGRCWRKSRSRSGSPGSSSCERHESRRRKRRHSGSRSRGRDGSPHSSLERDRRHKHRERSRERMDKKESMTRSRERRRWRSRSPSVEHRTRRPHSREKHPHSPEKKGAVREVSPAPAPQGEPRQDGDHSTKPPVSEVSVLPEVVSVLPEVVVADLNPPEVPPVLAESVSCVPEDLDYGDSVEAGHVFEDFSNEAIFIQLDDMSSPPSPESTDSSPERDFLPNPILPPASLPQNSTLPVTQREVLPIHSEDISKPAPQPLAPSDQCLLRQDTVETTATTLSTPGVLPMGKDSPLLSGRGCEVVRPKDAVAPAPLLRSRTLVKRVTWNLQEAEASTPALDRDPRTPLQRPQRPQEGDWDAEDRALIGFQQAPFSELPPPIHVLQESGLPDADPSQPPGVPRAEGPPAVGTLHSAGGILAQVYSPNMPPPLAQPSSIPPYALVNQPSVQLILQGTLPLASCGAAQNLAPVPTMPATASELAVPTTNNSEERTATPKTAAEKTKKEEYMKKLHMQERAVEEVKLAIKPFYQKREVTKEEYKDILRKAVQKICHSKSGEINPVKVANLVKAYVDKYRHMRKHKKTEAGEEPPTQGAET.

The tract at residues 1-82 is disordered; it reads MDDDNLDELV…GSEDSEDGIE (82 aa). The segment covering 41-81 has biased composition (acidic residues); that stretch reads DSEDDTGSEQDDDTDGEETEGLSEEEDPEDRSGSEDSEDGI. The RING-type; degenerate zinc finger occupies 109 to 150; the sequence is CPICLNAFRDQAVGTPETCAHYFCLDCIIEWSRNANSCPVDR. The segment at 188–238 adopts a PHD-type zinc-finger fold; the sequence is PTFCEVCGRSDREDRLLLCDGCDAGYHMECLDPPLQEVPVDEWFCPECAVP. Disordered regions lie at residues 333–390, 449–483, 537–590, 606–777, and 809–860; these read PLTP…KLKN, DSNGEQSADPPSPLSAKRRVLSRSALQSHQPVARP, SAKR…GLSC, TPVR…GSSF, and KVQR…LLPS. A Phosphothreonine modification is found at T335. 2 stretches are compositionally biased toward basic residues: residues 339–364 and 372–387; these read PAKRKRKAGRRKKVLGRKKTRSRSSV and RAKKRQHRVRRTKGRK. Phosphoserine is present on residues S450 and S460. Polar residues-rich tracts occupy residues 606–625 and 637–662; these read TPVRSDSSVTPRSGLSGNLS and SPRLNGSNVRVGSASTKTMTHSNFPS. Positions 671–682 are enriched in basic and acidic residues; it reads QKTDPRRPDFSK. 2 stretches are compositionally biased toward polar residues: residues 694–709 and 737–751; these read SNSTQDQAPASGQTVE and SSRGPQETGSHTSGS. A phosphoserine mark is found at S817, S848, S849, S867, S870, S922, S948, S984, and S1002. The span at 835–860 shows a compositional bias: low complexity; sequence PFDPTGSDSSPPSSSPESLGSGLLPS. 3 disordered regions span residues 892–1229, 1290–1355, and 1369–1390; these read GTEM…VSEV, QLDD…APSD, and TTLSTPGVLPMGKDSPLLSGRG. The span at 922–934 shows a compositional bias: acidic residues; that stretch reads SDLEQEGLGEIEP. The segment covering 1001-1010 has biased composition (low complexity); sequence SSRSRSTSSS. 2 stretches are compositionally biased toward basic residues: residues 1011–1031 and 1054–1064; these read RSRKKTKKKKKVAREHQRTRS and KRHRAKTKSRR. Over residues 1065–1075 the composition is skewed to basic and acidic residues; sequence SSSDRASSQDR. Composition is skewed to basic residues over residues 1089–1102 and 1117–1129; these read GPWGHGRCWRKSRS and SRRRKRRHSGSRS. Basic and acidic residues-rich tracts occupy residues 1130 to 1143 and 1151 to 1165; these read RGRDGSPHSSLERD and RSRERMDKKESMTRS. 2 positions are modified to phosphoserine: S1135 and S1139. Residues 1181-1191 show a composition bias toward basic residues; it reads RTRRPHSREKH. The span at 1192-1201 shows a compositional bias: basic and acidic residues; it reads PHSPEKKGAV. S1205 bears the Phosphoserine mark. The segment covering 1292–1305 has biased composition (low complexity); that stretch reads DDMSSPPSPESTDS. Residues S1372 and S1383 each carry the phosphoserine modification. T1416 is modified (phosphothreonine). Disordered stretches follow at residues 1421–1448, 1466–1501, and 1569–1591; these read EAEASTPALDRDPRTPLQRPQRPQEGDW, LPPPIHVLQESGLPDADPSQPPGVPRAEGPPAVGTL, and LAVPTTNNSEERTATPKTAAEKT. The span at 1577-1591 shows a compositional bias: basic and acidic residues; it reads SEERTATPKTAAEKT. Residues 1589–1615 are a coiled coil; sequence EKTKKEEYMKKLHMQERAVEEVKLAIK.

Interacts with POLR2A (via the C-terminal domain).

The chain is PHD and RING finger domain-containing protein 1 from Rattus norvegicus (Rat).